Reading from the N-terminus, the 490-residue chain is Aspartyl/glutamyl-tRNA(Asn/Gln) amidotransferase subunit B (490 aa).

It belongs to the GatB/GatE family. GatB subfamily. Heterotrimer of A, B and C subunits.

The enzyme catalyses L-glutamyl-tRNA(Gln) + L-glutamine + ATP + H2O = L-glutaminyl-tRNA(Gln) + L-glutamate + ADP + phosphate + H(+). It catalyses the reaction L-aspartyl-tRNA(Asn) + L-glutamine + ATP + H2O = L-asparaginyl-tRNA(Asn) + L-glutamate + ADP + phosphate + 2 H(+). Functionally, allows the formation of correctly charged Asn-tRNA(Asn) or Gln-tRNA(Gln) through the transamidation of misacylated Asp-tRNA(Asn) or Glu-tRNA(Gln) in organisms which lack either or both of asparaginyl-tRNA or glutaminyl-tRNA synthetases. The reaction takes place in the presence of glutamine and ATP through an activated phospho-Asp-tRNA(Asn) or phospho-Glu-tRNA(Gln). In Methylorubrum extorquens (strain CM4 / NCIMB 13688) (Methylobacterium extorquens), this protein is Aspartyl/glutamyl-tRNA(Asn/Gln) amidotransferase subunit B.